Reading from the N-terminus, the 126-residue chain is Protein ApaG (126 aa).

The region spanning Ser-2–His-126 is the ApaG domain.

The polypeptide is Protein ApaG (Pseudomonas fluorescens (strain SBW25)).